A 633-amino-acid chain; its full sequence is Kinesin-like motor protein 9 (633 aa).

Residues 1–392 (MIQIFLRVKK…MRYSANAREI (392 aa)) enclose the Kinesin motor domain. 94–101 (GVSGAGKT) serves as a coordination point for ATP. Disordered stretches follow at residues 393–423 (LPPP…TKAL), 531–556 (LEEE…SRKL), and 575–633 (KLWP…INEL). Polar residues predominate over residues 398 to 423 (NENSGSQSPSHSLLQKSKNTSSTKAL). Residues 417 to 541 (TSSTKALTSH…EEESIKESSA (125 aa)) are a coiled coil. The segment covering 578 to 587 (PQSTLIQAPN) has biased composition (polar residues). Over residues 604-623 (VSPIKPLSPSRRPPLTSLYS) the composition is skewed to low complexity. Residues serine 605, serine 611, and serine 613 each carry the phosphoserine modification. Residues 624-633 (GTTDIDINEL) show a composition bias toward polar residues.

Belongs to the TRAFAC class myosin-kinesin ATPase superfamily. Kinesin family. Interacts with ase1. In terms of processing, phosphorylated by cdc2 and dephosphorylated by clp1. Dephosphorylation is required for the interaction with ase1.

Its subcellular location is the nucleus. The protein localises to the cytoplasm. It localises to the cytoskeleton. The protein resides in the microtubule organizing center. It is found in the spindle pole body. In terms of biological role, kinesin-like motor protein involved in anaphase B spindle elongation. This Schizosaccharomyces pombe (strain 972 / ATCC 24843) (Fission yeast) protein is Kinesin-like motor protein 9 (klp9).